The primary structure comprises 360 residues: 3-dehydroquinate synthase (360 aa).

NAD(+) is bound by residues 104–108, 128–129, K141, and 168–171; these read GVIGD, TT, and FLDT. Positions 183, 243, and 260 each coordinate Zn(2+).

Belongs to the sugar phosphate cyclases superfamily. Dehydroquinate synthase family. It depends on Co(2+) as a cofactor. The cofactor is Zn(2+). NAD(+) serves as cofactor.

It localises to the cytoplasm. The catalysed reaction is 7-phospho-2-dehydro-3-deoxy-D-arabino-heptonate = 3-dehydroquinate + phosphate. Its pathway is metabolic intermediate biosynthesis; chorismate biosynthesis; chorismate from D-erythrose 4-phosphate and phosphoenolpyruvate: step 2/7. Catalyzes the conversion of 3-deoxy-D-arabino-heptulosonate 7-phosphate (DAHP) to dehydroquinate (DHQ). The chain is 3-dehydroquinate synthase from Streptococcus equi subsp. equi (strain 4047).